A 358-amino-acid chain; its full sequence is UDP-3-O-acylglucosamine N-acyltransferase (358 aa).

Histidine 248 serves as the catalytic Proton acceptor.

The protein belongs to the transferase hexapeptide repeat family. LpxD subfamily. In terms of assembly, homotrimer.

The enzyme catalyses a UDP-3-O-[(3R)-3-hydroxyacyl]-alpha-D-glucosamine + a (3R)-hydroxyacyl-[ACP] = a UDP-2-N,3-O-bis[(3R)-3-hydroxyacyl]-alpha-D-glucosamine + holo-[ACP] + H(+). Its pathway is bacterial outer membrane biogenesis; LPS lipid A biosynthesis. Catalyzes the N-acylation of UDP-3-O-acylglucosamine using 3-hydroxyacyl-ACP as the acyl donor. Is involved in the biosynthesis of lipid A, a phosphorylated glycolipid that anchors the lipopolysaccharide to the outer membrane of the cell. In Synechococcus sp. (strain WH7803), this protein is UDP-3-O-acylglucosamine N-acyltransferase.